Consider the following 119-residue polypeptide: Holo-[acyl-carrier-protein] synthase (119 aa).

Residues Asp-5 and Glu-51 each coordinate Mg(2+).

Belongs to the P-Pant transferase superfamily. AcpS family. It depends on Mg(2+) as a cofactor.

Its subcellular location is the cytoplasm. It carries out the reaction apo-[ACP] + CoA = holo-[ACP] + adenosine 3',5'-bisphosphate + H(+). Transfers the 4'-phosphopantetheine moiety from coenzyme A to a Ser of acyl-carrier-protein. The chain is Holo-[acyl-carrier-protein] synthase from Helicobacter pylori (strain G27).